The primary structure comprises 348 residues: Phosphate acyltransferase (348 aa).

The protein belongs to the PlsX family. In terms of assembly, homodimer. Probably interacts with PlsY.

It localises to the cytoplasm. It catalyses the reaction a fatty acyl-[ACP] + phosphate = an acyl phosphate + holo-[ACP]. The protein operates within lipid metabolism; phospholipid metabolism. Functionally, catalyzes the reversible formation of acyl-phosphate (acyl-PO(4)) from acyl-[acyl-carrier-protein] (acyl-ACP). This enzyme utilizes acyl-ACP as fatty acyl donor, but not acyl-CoA. In Lactiplantibacillus plantarum (strain ATCC BAA-793 / NCIMB 8826 / WCFS1) (Lactobacillus plantarum), this protein is Phosphate acyltransferase.